The sequence spans 477 residues: Adenylyl cyclase-associated protein 2 (477 aa).

Alanine 2 is modified (N-acetylalanine). Disordered regions lie at residues 224–262 (SILS…PSRS) and 274–324 (ITKG…HAPV). Over residues 231-248 (GLPPPPPPPPPPGPPPPF) the composition is skewed to pro residues. Residues 300-318 (RSPTKTRTPSPTSSKSNSP) are compositionally biased toward low complexity. Phosphoserine occurs at positions 301 and 309. The C-CAP/cofactor C-like domain maps to 318-455 (PQKHAPVLEL…QGDDYREFPI (138 aa)).

Belongs to the CAP family. Found at relatively high levels in testes, at moderate levels in brain, heart and skeletal muscle, at lower levels in lung, skin, kidney and small intestine, and is undetectable in liver or spleen.

It is found in the cell membrane. Its function is as follows. Involved in the regulation of actin polymerization. This is Adenylyl cyclase-associated protein 2 (Cap2) from Rattus norvegicus (Rat).